A 104-amino-acid polypeptide reads, in one-letter code: uncharacterized protein (104 aa).

Positions 1–18 are cleaved as a signal peptide; sequence MGVEGMWNVFLFSLQVAA. An N-linked (GlcNAc...) asparagine; by host glycan is attached at Asn27.

This is an uncharacterized protein from Fowl adenovirus A serotype 1 (strain CELO / Phelps) (FAdV-1).